Reading from the N-terminus, the 269-residue chain is Hydroxyethylthiazole kinase (269 aa).

Met46 contributes to the substrate binding site. Residues Arg122 and Thr168 each coordinate ATP. Gly195 is a substrate binding site.

Belongs to the Thz kinase family. Mg(2+) is required as a cofactor.

The catalysed reaction is 5-(2-hydroxyethyl)-4-methylthiazole + ATP = 4-methyl-5-(2-phosphooxyethyl)-thiazole + ADP + H(+). It participates in cofactor biosynthesis; thiamine diphosphate biosynthesis; 4-methyl-5-(2-phosphoethyl)-thiazole from 5-(2-hydroxyethyl)-4-methylthiazole: step 1/1. Functionally, catalyzes the phosphorylation of the hydroxyl group of 4-methyl-5-beta-hydroxyethylthiazole (THZ). The protein is Hydroxyethylthiazole kinase of Geobacillus thermodenitrificans (strain NG80-2).